The chain runs to 451 residues: Phosphoglucosamine mutase (451 aa).

Ser-102 (phosphoserine intermediate) is an active-site residue. The Mg(2+) site is built by Ser-102, Asp-243, Asp-245, and Asp-247. Ser-102 carries the phosphoserine modification.

This sequence belongs to the phosphohexose mutase family. Mg(2+) is required as a cofactor. Activated by phosphorylation.

It catalyses the reaction alpha-D-glucosamine 1-phosphate = D-glucosamine 6-phosphate. Functionally, catalyzes the conversion of glucosamine-6-phosphate to glucosamine-1-phosphate. In Salinispora arenicola (strain CNS-205), this protein is Phosphoglucosamine mutase.